The following is a 748-amino-acid chain: Ribonucleoprotein PTB-binding 1 (748 aa).

The segment at 1–42 is disordered; that stretch reads MAADVSVTHRPPLSPEAEAEAETPETVDRRTPEQELPPLDPE. N-acetylalanine is present on Ala-2. Phosphoserine is present on residues Ser-6 and Ser-14. Thr-31 carries the phosphothreonine modification. Positions 45-60 match the Nuclear localization signal motif; sequence RKRLEHTERQFRNRRK. RRM domains follow at residues 59-130, 132-210, and 221-299; these read RKIL…LQPT, ALLC…WTDA, and RCLC…FCAP. Positions 307–401 are interaction with PTBP1; sequence LAALIAAQAT…QSQSQKKPGI (95 aa). Disordered stretches follow at residues 390–505, 525–647, and 672–731; these read QSQS…GEPP, SNLA…PLSH, and KAVG…QHSQ. The residue at position 469 (Thr-469) is a Phosphothreonine. Residues Ser-480, Ser-576, Ser-626, and Ser-630 each carry the phosphoserine modification. A compositionally biased stretch (low complexity) spans 675 to 685; the sequence is GSSPMGSSEGL. 2 positions are modified to phosphoserine: Ser-716 and Ser-720. The short motif at 743-746 is the Nuclear localization signal element; it reads KRKR.

In terms of assembly, interacts with PTBP1, RAVER2, VCL and ACTN1. Part of a complex containing RAVER1, VCL and ACTN1. Ubiquitous. Detected in aorta, brain, gut, heart, kidney, liver, spleen, uterus and skeletal muscle.

The protein localises to the nucleus. It localises to the cytoplasm. In terms of biological role, cooperates with PTBP1 to modulate regulated alternative splicing events. Promotes exon skipping. Cooperates with PTBP1 to modulate switching between mutually exclusive exons during maturation of the TPM1 pre-mRNA. In Rattus norvegicus (Rat), this protein is Ribonucleoprotein PTB-binding 1 (Raver1).